The chain runs to 247 residues: PABIR family member 2 (247 aa).

The interval 1–23 (MAQEKMELDLEPDTSYGGTLRRS) is disordered. The residue at position 2 (Ala-2) is an N-acetylalanine. Phosphoserine is present on residues Ser-25, Ser-33, Ser-50, Ser-58, and Leu-63. The disordered stretch occupies residues 82–104 (ISQSWDESLSLSDSDFDKPEKLY). Low complexity predominate over residues 83–94 (SQSWDESLSLSD). Residue Thr-112 is modified to Phosphothreonine. Phosphoserine occurs at positions 115 and 119. Arg-122 is subject to Omega-N-methylarginine. Disordered stretches follow at residues 129–152 (VSSS…SQSP), 158–177 (PSVL…SQPK), and 202–230 (DILD…SPVA). Ser-137 and Ser-141 each carry phosphoserine. The span at 166–176 (RKGEMETESQP) shows a compositional bias: basic and acidic residues. Residues 202 to 216 (DILDGSSSSSGLSSD) show a composition bias toward low complexity.

The protein belongs to the FAM122 family. In terms of processing, isoform 3 and isoform 4 are phosphorylated on Ser-62 and Ser-64.

The polypeptide is PABIR family member 2 (Homo sapiens (Human)).